The primary structure comprises 165 residues: Lipoprotein signal peptidase (165 aa).

The next 3 helical transmembrane spans lie at 9-29 (LLTI…VLLY), 69-89 (KYFL…FLFL), and 100-120 (FSLI…FFYN). Catalysis depends on residues Asp-124 and Asp-142. A helical membrane pass occupies residues 133–153 (WSFPTFNFADIFISLGTLIFV).

This sequence belongs to the peptidase A8 family.

It localises to the cell inner membrane. It catalyses the reaction Release of signal peptides from bacterial membrane prolipoproteins. Hydrolyzes -Xaa-Yaa-Zaa-|-(S,diacylglyceryl)Cys-, in which Xaa is hydrophobic (preferably Leu), and Yaa (Ala or Ser) and Zaa (Gly or Ala) have small, neutral side chains.. It functions in the pathway protein modification; lipoprotein biosynthesis (signal peptide cleavage). Functionally, this protein specifically catalyzes the removal of signal peptides from prolipoproteins. This chain is Lipoprotein signal peptidase, found in Chlamydia felis (strain Fe/C-56) (Chlamydophila felis).